The following is a 260-amino-acid chain: Snake venom serine protease homolog KN7 (260 aa).

The N-terminal stretch at 1–18 (MVLIRVLANLLILQLSYA) is a signal peptide. Residues 19 to 24 (QKSSEL) constitute a propeptide that is removed on maturation. The Peptidase S1 domain occupies 25 to 251 (IIGGDECNIN…HLDWIKSIIA (227 aa)). 6 cysteine pairs are disulfide-bonded: Cys31-Cys165, Cys52-Cys68, Cys100-Cys258, Cys144-Cys212, Cys176-Cys191, and Cys202-Cys227. Asn83, Asn123, and Asn124 each carry an N-linked (GlcNAc...) asparagine glycan.

The protein belongs to the peptidase S1 family. Snake venom subfamily. Expressed by the venom gland.

It localises to the secreted. In terms of biological role, snake venom serine protease homolog that may act in the hemostasis system of the prey. The polypeptide is Snake venom serine protease homolog KN7 (Trimeresurus stejnegeri (Chinese green tree viper)).